A 929-amino-acid chain; its full sequence is MPDYKSTLNLPDTPFPMRGDLAKREPGWVKSWQEKKRYEAIRAAAAGRPKFILHDGPPYANGDIHIGHAVNKILKDIIVKAKTLSGFDAPYVPGWDCHGLPIELQVEKTHGKDIPPAKFRELCRAYAAEQIERQKADFIRLGVLGDWSNPYRTMDFQFEADTLRVLGQIQQAGFLYQGAKPVHWCVDCGSALAEAEVEYEDKNSPAIDVGFAVADRADLARRFDVAAIDTPVQIVIWTTTPWTLPANQAVALHPDFPYTLVRTARGLLVLAESLREAALVRYGLADGAEILAHTTGQMLEGLPLWHPFQDRQVPVIVGEHVTADAGTGAVHTAPGHGLDDYVVGSRYGLKVDNPVGDDGRFYASVPLVGGMSIWQANPLIVETLEASGALLAHEKLLHSYPHCWRHKTPIIFRATRQWFIGMDSAGQDSGVRDQGATLREQAMKAVEATQFFPHWGRARLEAMIRNRPDWCVSRQRNWGVPMPFFTHRETGALHPRTTELLEIVAQRVETAGIEAWFALDPAELLGDDAAHYDKTGHTLDVWFDSGVTHACVLKRRSELAHPADLYLEGSDQHRGWFQSSLLTGCATDGRAPYDALLTHGFVVDGKGHKMSKSKGNVIAPQKVMDQYGADILRLWVATTDYSGELSISDEILKRVVEGYRRIRNTLKFLLANLSDFDPREHAMSVDEWLEIDRYALAMTRRLQGELQRHYDAYEFHFIVQKLQSFCSEDLGGFYLDILKDRLYTSAGDSRARRAAQNALHHLTHALVRWMAPILSFTGEEVWTQLADADDSVFLHTRHVLPEQGGEDELLERWARIRALRAEVQKELETVRVAGAIGSSLQAEVTLHATPSTAALLSSLADDLRFVLITSQARVVGADADRVEVAPSAAKKCDRCWHYRDDVDAHPEHPGLCGRCVSNLFGDGEARRHA.

The 'HIGH' region motif lies at 58 to 68; the sequence is PYANGDIHIGH. L-isoleucyl-5'-AMP is bound at residue Glu568. A 'KMSKS' region motif is present at residues 609–613; that stretch reads KMSKS. Lys612 contacts ATP. 4 residues coordinate Zn(2+): Cys892, Cys895, Cys912, and Cys915.

Belongs to the class-I aminoacyl-tRNA synthetase family. IleS type 1 subfamily. In terms of assembly, monomer. Zn(2+) is required as a cofactor.

Its subcellular location is the cytoplasm. The enzyme catalyses tRNA(Ile) + L-isoleucine + ATP = L-isoleucyl-tRNA(Ile) + AMP + diphosphate. Its function is as follows. Catalyzes the attachment of isoleucine to tRNA(Ile). As IleRS can inadvertently accommodate and process structurally similar amino acids such as valine, to avoid such errors it has two additional distinct tRNA(Ile)-dependent editing activities. One activity is designated as 'pretransfer' editing and involves the hydrolysis of activated Val-AMP. The other activity is designated 'posttransfer' editing and involves deacylation of mischarged Val-tRNA(Ile). This Thiobacillus denitrificans (strain ATCC 25259 / T1) protein is Isoleucine--tRNA ligase.